The chain runs to 668 residues: MSAKTVVFAYHDIGCAGIQALLDSGYDIAAVFTHAHDPKENTFYASVAQLCANNGIAVHAPEDANHPLWIERIAKLDPDYIFSFYYRNLLSEPLLALAKKGAFNLHGSLLPRYRGRAPANWVLVNGETETGVTLHRMVKRADAGAIVAQQRVAIERSDTALSLHGKLRTAASDLLRDALPAMLQGRITETPQDESKATVFGRRTPADGKLVWAQPAEKLFNLVRAVTQPYPGAFCAVGEHKLIVWSAEVVKGNEGQAPGRVISVDPLRIACGEDSLVINAGQRNDNGLYLSGPQLANELGLVDGSLLRGAESGRGPRRTRVLILGVNGFIGNHLSERLLRDERYEVYGLDIGSDAIDRLRSHPRFHFVEGDISIHSEWIEYHIKKCDVVLPLVAIATPIEYTRNPLRVFELDFEENLKLVRYCVKYNKRVIFPSTSEVYGMCQDKHFDEDRSNLIVGPINKQRWIYSVSKQLLDRVIWAYGAKGLNFTLFRPFNWMGPRLDRLDSARIGSSRAITQLILNLVEGTPIRLFDGGEQKRCFTDIADGVEALARIIDNDNDVCNGQIINIGNPDNEASIRQLGEELLRQFEAHPLRSNFPPFAGFRDVESKAFYGAGYQDVEHRKPSIANAKRLLDWTPTVEMRETIGNTLDFFLREAMLEIERPSNKEAC.

Positions 1–307 are formyltransferase ArnAFT; it reads MSAKTVVFAY…ELGLVDGSLL (307 aa). His106 serves as the catalytic Proton donor; for formyltransferase activity. (6R)-10-formyltetrahydrofolate-binding positions include Arg116 and 138-142; that span reads VKRAD. Residues 317 to 668 form a dehydrogenase ArnADH region; the sequence is RRTRVLILGV…IERPSNKEAC (352 aa). NAD(+) is bound by residues Asp350 and 371 to 372; that span reads DI. UDP-alpha-D-glucuronate is bound by residues Ala396, Tyr401, and 435-436; that span reads TS. The Proton acceptor; for decarboxylase activity role is filled by Glu437. UDP-alpha-D-glucuronate is bound by residues Arg463, Asn494, 528–537, and Tyr615; that span reads RLFDGGEQKR. The active-site Proton donor; for decarboxylase activity is Arg621.

The protein in the N-terminal section; belongs to the Fmt family. UDP-L-Ara4N formyltransferase subfamily. In the C-terminal section; belongs to the NAD(P)-dependent epimerase/dehydratase family. UDP-glucuronic acid decarboxylase subfamily. Homohexamer, formed by a dimer of trimers.

The catalysed reaction is UDP-alpha-D-glucuronate + NAD(+) = UDP-beta-L-threo-pentopyranos-4-ulose + CO2 + NADH. It catalyses the reaction UDP-4-amino-4-deoxy-beta-L-arabinose + (6R)-10-formyltetrahydrofolate = UDP-4-deoxy-4-formamido-beta-L-arabinose + (6S)-5,6,7,8-tetrahydrofolate + H(+). Its pathway is nucleotide-sugar biosynthesis; UDP-4-deoxy-4-formamido-beta-L-arabinose biosynthesis; UDP-4-deoxy-4-formamido-beta-L-arabinose from UDP-alpha-D-glucuronate: step 1/3. The protein operates within nucleotide-sugar biosynthesis; UDP-4-deoxy-4-formamido-beta-L-arabinose biosynthesis; UDP-4-deoxy-4-formamido-beta-L-arabinose from UDP-alpha-D-glucuronate: step 3/3. It functions in the pathway bacterial outer membrane biogenesis; lipopolysaccharide biosynthesis. Functionally, bifunctional enzyme that catalyzes the oxidative decarboxylation of UDP-glucuronic acid (UDP-GlcUA) to UDP-4-keto-arabinose (UDP-Ara4O) and the addition of a formyl group to UDP-4-amino-4-deoxy-L-arabinose (UDP-L-Ara4N) to form UDP-L-4-formamido-arabinose (UDP-L-Ara4FN). The modified arabinose is attached to lipid A and is required for resistance to polymyxin and cationic antimicrobial peptides. In Pseudomonas fluorescens (strain Pf0-1), this protein is Bifunctional polymyxin resistance protein ArnA.